The primary structure comprises 103 residues: Large ribosomal subunit protein bL21 (103 aa).

The protein belongs to the bacterial ribosomal protein bL21 family. Part of the 50S ribosomal subunit. Contacts protein L20.

Functionally, this protein binds to 23S rRNA in the presence of protein L20. The chain is Large ribosomal subunit protein bL21 from Mycolicibacterium paratuberculosis (strain ATCC BAA-968 / K-10) (Mycobacterium paratuberculosis).